Reading from the N-terminus, the 212-residue chain is Imidazole glycerol phosphate synthase subunit HisH (212 aa).

The 210-residue stretch at 1–210 folds into the Glutamine amidotransferase type-1 domain; sequence MIAVINYGAG…VRWSEAVQPK (210 aa). The active-site Nucleophile is the C79. Catalysis depends on residues H185 and E187.

In terms of assembly, heterodimer of HisH and HisF.

Its subcellular location is the cytoplasm. It catalyses the reaction 5-[(5-phospho-1-deoxy-D-ribulos-1-ylimino)methylamino]-1-(5-phospho-beta-D-ribosyl)imidazole-4-carboxamide + L-glutamine = D-erythro-1-(imidazol-4-yl)glycerol 3-phosphate + 5-amino-1-(5-phospho-beta-D-ribosyl)imidazole-4-carboxamide + L-glutamate + H(+). The catalysed reaction is L-glutamine + H2O = L-glutamate + NH4(+). It functions in the pathway amino-acid biosynthesis; L-histidine biosynthesis; L-histidine from 5-phospho-alpha-D-ribose 1-diphosphate: step 5/9. IGPS catalyzes the conversion of PRFAR and glutamine to IGP, AICAR and glutamate. The HisH subunit catalyzes the hydrolysis of glutamine to glutamate and ammonia as part of the synthesis of IGP and AICAR. The resulting ammonia molecule is channeled to the active site of HisF. The protein is Imidazole glycerol phosphate synthase subunit HisH of Chloroflexus aurantiacus (strain ATCC 29364 / DSM 637 / Y-400-fl).